Here is a 235-residue protein sequence, read N- to C-terminus: Uridylate kinase (235 aa).

8 to 11 (KLSG) provides a ligand contact to ATP. Gly-49 provides a ligand contact to UMP. 2 residues coordinate ATP: Gly-50 and Arg-54. 131–138 (TGNPYFST) contacts UMP. ATP-binding residues include Asn-159, Tyr-165, and Asp-168.

The protein belongs to the UMP kinase family. Homohexamer.

Its subcellular location is the cytoplasm. The enzyme catalyses UMP + ATP = UDP + ADP. It participates in pyrimidine metabolism; CTP biosynthesis via de novo pathway; UDP from UMP (UMPK route): step 1/1. Its activity is regulated as follows. Inhibited by UTP. Its function is as follows. Catalyzes the reversible phosphorylation of UMP to UDP. This Mycoplasma pneumoniae (strain ATCC 29342 / M129 / Subtype 1) (Mycoplasmoides pneumoniae) protein is Uridylate kinase.